The primary structure comprises 274 residues: MGKSLSHLPLHSSKEDAYDGVTSENMRNGLVNSEVHNEDGRNGDVSQFPYVEFTGRDSVTCPTCQGTGRIPRGQENQLVALIPYSDQRLRPRRTKLYVMASVFVCLLLSGLAVFFLFPRSIDVKYIGVKSAYVSYDVQKRTIYLNITNTLNITNNNYYSVEVENITAQVQFSKTVIGKARLNNITIIGPLDMKQIDYTVPTVIAEEMSYMYDFCTLISIKVHNIVLMMQVTVTTTYFGHSEQISQERYQYVDCGRNTTYQLGQSEYLNVLQPQQ.

Over residues 1 to 11 (MGKSLSHLPLH) the composition is skewed to low complexity. Residues 1-20 (MGKSLSHLPLHSSKEDAYDG) are disordered. Gly2 is lipidated: N-myristoyl glycine. Topologically, residues 2 to 96 (GKSLSHLPLH…QRLRPRRTKL (95 aa)) are cytoplasmic. The residue at position 33 (Ser33) is a Phosphoserine. Residues 97–117 (YVMASVFVCLLLSGLAVFFLF) traverse the membrane as a helical segment. Residues 118 to 274 (PRSIDVKYIG…EYLNVLQPQQ (157 aa)) lie on the Lumenal side of the membrane. Residues Asn145, Asn151, Asn164, and Asn183 are each glycosylated (N-linked (GlcNAc...) asparagine). Cys214 and Cys253 are joined by a disulfide. Asn256 carries an N-linked (GlcNAc...) asparagine glycan.

Belongs to the TMEM106 family. As to quaternary structure, can form homomers. Interacts (via N-terminus) with MAP6 (via C-terminus). Interacts (via C-terminus) with the vacuolar-type ATPase subunit ATP6AP1. Interacts (via N-terminus) with AP2M1 and CLTC. Interacts with TMEM106C. In terms of assembly, (Microbial infection) Interacts with SARS coronavirus-2/SARS-CoV-2 spike protein (via RBD domain). As to expression, expressed in the brain, including in the frontal cortex (at protein level). Expressed in lung epithelial cells.

Its subcellular location is the late endosome membrane. The protein resides in the lysosome membrane. It localises to the cell membrane. Its function is as follows. In neurons, involved in the transport of late endosomes/lysosomes. May be involved in dendrite morphogenesis and maintenance by regulating lysosomal trafficking. May act as a molecular brake for retrograde transport of late endosomes/lysosomes, possibly via its interaction with MAP6. In motoneurons, may mediate the axonal transport of lysosomes and axonal sorting at the initial segment. It remains unclear whether TMEM106B affects the transport of moving lysosomes in the anterograde or retrograde direction in neurites and whether it is important in the sorting of lysosomes in axons or in dendrites. In neurons, may also play a role in the regulation of lysosomal size and responsiveness to stress. Required for proper lysosomal acidification. Functionally, (Microbial infection) Plays a role in human coronavirus SARS-CoV-2 infection, but not in common cold coronaviruses HCoV-229E and HCoV-OC43 infections. Involved in ACE2-independent SARS-CoV-2 cell entry. Required for post-endocytic stage of virus entry, facilitates spike-mediated membrane fusion. Virus attachment and endocytosis can also be mediated by other cell surface receptors. The sequence is that of Transmembrane protein 106B from Homo sapiens (Human).